A 183-amino-acid chain; its full sequence is Ribosome maturation factor RimM (183 aa).

One can recognise a PRC barrel domain in the interval Glu-103–Phe-183.

This sequence belongs to the RimM family. In terms of assembly, binds ribosomal protein uS19.

It is found in the cytoplasm. In terms of biological role, an accessory protein needed during the final step in the assembly of 30S ribosomal subunit, possibly for assembly of the head region. Essential for efficient processing of 16S rRNA. May be needed both before and after RbfA during the maturation of 16S rRNA. It has affinity for free ribosomal 30S subunits but not for 70S ribosomes. The protein is Ribosome maturation factor RimM of Escherichia coli O157:H7 (strain EC4115 / EHEC).